Consider the following 137-residue polypeptide: Small ribosomal subunit protein uS12 (137 aa).

Positions 1 to 25 are disordered; the sequence is MPTINQLVRQGRKSKTYKSDSPALS. D102 is subject to 3-methylthioaspartic acid.

It belongs to the universal ribosomal protein uS12 family. As to quaternary structure, part of the 30S ribosomal subunit. Contacts proteins S8 and S17. May interact with IF1 in the 30S initiation complex.

Its function is as follows. With S4 and S5 plays an important role in translational accuracy. Interacts with and stabilizes bases of the 16S rRNA that are involved in tRNA selection in the A site and with the mRNA backbone. Located at the interface of the 30S and 50S subunits, it traverses the body of the 30S subunit contacting proteins on the other side and probably holding the rRNA structure together. The combined cluster of proteins S8, S12 and S17 appears to hold together the shoulder and platform of the 30S subunit. The sequence is that of Small ribosomal subunit protein uS12 from Finegoldia magna (strain ATCC 29328 / DSM 20472 / WAL 2508) (Peptostreptococcus magnus).